Reading from the N-terminus, the 373-residue chain is 4-hydroxy-3-methylbut-2-en-1-yl diphosphate synthase (flavodoxin) (373 aa).

[4Fe-4S] cluster contacts are provided by cysteine 270, cysteine 273, cysteine 305, and glutamate 312.

This sequence belongs to the IspG family. [4Fe-4S] cluster is required as a cofactor.

It catalyses the reaction (2E)-4-hydroxy-3-methylbut-2-enyl diphosphate + oxidized [flavodoxin] + H2O + 2 H(+) = 2-C-methyl-D-erythritol 2,4-cyclic diphosphate + reduced [flavodoxin]. It functions in the pathway isoprenoid biosynthesis; isopentenyl diphosphate biosynthesis via DXP pathway; isopentenyl diphosphate from 1-deoxy-D-xylulose 5-phosphate: step 5/6. Converts 2C-methyl-D-erythritol 2,4-cyclodiphosphate (ME-2,4cPP) into 1-hydroxy-2-methyl-2-(E)-butenyl 4-diphosphate. The chain is 4-hydroxy-3-methylbut-2-en-1-yl diphosphate synthase (flavodoxin) from Erwinia tasmaniensis (strain DSM 17950 / CFBP 7177 / CIP 109463 / NCPPB 4357 / Et1/99).